The chain runs to 62 residues: Photosystem II reaction center protein Z (62 aa).

2 consecutive transmembrane segments (helical) span residues 8–28 and 41–61; these read ALFA…VILA and FSGA…NSFI.

It belongs to the PsbZ family. In terms of assembly, PSII is composed of 1 copy each of membrane proteins PsbA, PsbB, PsbC, PsbD, PsbE, PsbF, PsbH, PsbI, PsbJ, PsbK, PsbL, PsbM, PsbT, PsbY, PsbZ, Psb30/Ycf12, at least 3 peripheral proteins of the oxygen-evolving complex and a large number of cofactors. It forms dimeric complexes.

The protein resides in the plastid. Its subcellular location is the chloroplast thylakoid membrane. Functionally, may control the interaction of photosystem II (PSII) cores with the light-harvesting antenna, regulates electron flow through the 2 photosystem reaction centers. PSII is a light-driven water plastoquinone oxidoreductase, using light energy to abstract electrons from H(2)O, generating a proton gradient subsequently used for ATP formation. This Chara vulgaris (Common stonewort) protein is Photosystem II reaction center protein Z.